The following is a 299-amino-acid chain: Proline iminopeptidase (299 aa).

Residues 26–272 (VLLLAGGPGF…QFLYCANGSH (247 aa)) enclose the AB hydrolase-1 domain. The active-site Nucleophile is Ser103. Asp245 is a catalytic residue. The active-site Proton donor is the His272.

Belongs to the peptidase S33 family. As to quaternary structure, monomer.

It carries out the reaction Release of N-terminal proline from a peptide.. Releases the N-terminal proline from various substrates. The polypeptide is Proline iminopeptidase (Chitinophaga pinensis (strain ATCC 43595 / DSM 2588 / LMG 13176 / NBRC 15968 / NCIMB 11800 / UQM 2034)).